Here is an 857-residue protein sequence, read N- to C-terminus: uncharacterized protein (857 aa).

4 disordered regions span residues 316–339, 484–561, 619–777, and 809–836; these read PPAP…TKEN, AKQP…PRTN, GQFP…PKPQ, and EQRP…STGK. Composition is skewed to basic and acidic residues over residues 324-339, 518-534, and 630-640; these read PENK…TKEN, KKTE…KAEE, and QRAESSIDKDC. The span at 683-700 shows a compositional bias: polar residues; sequence RTTTVQPHSHSAQPTTLR. The span at 708 to 725 shows a compositional bias: low complexity; that stretch reads SSSLIASAKPAPPISSSS. Polar residues predominate over residues 726 to 738; sequence TGPNVTNPNQSSA. A compositionally biased stretch (basic and acidic residues) spans 809 to 828; it reads EQRPEREAMKRQAQQERENA.

This is an uncharacterized protein from Mus musculus (Mouse).